The primary structure comprises 1157 residues: Cyclin-dependent kinase 12 (1157 aa).

The interval 15 to 540 is disordered; sequence SDVSSEDFSD…RSPTSRDLKH (526 aa). A compositionally biased stretch (acidic residues) spans 18–32; the sequence is SSEDFSDQEAGDLDA. Residues 55 to 76 show a composition bias toward basic and acidic residues; the sequence is GRLDAKPDKEGYDNYRSRRAED. Positions 85 to 94 are enriched in polar residues; that stretch reads SRQTSSSEAT. Position 106 is a phosphothreonine (threonine 106). The span at 134–162 shows a compositional bias: basic residues; that stretch reads RQKRKKQKKEKHKHKSKKKSKKRKKKRAK. Residues 163 to 176 are compositionally biased toward low complexity; that stretch reads SYSSIDSMSDNDIN. Threonine 184 bears the Phosphothreonine mark. Residues 189 to 215 show a composition bias toward polar residues; that stretch reads PSKSNERTVSAAPSSFTPHNLKESSSP. Phosphoserine is present on residues serine 190 and serine 192. Residue threonine 217 is modified to Phosphothreonine. A compositionally biased stretch (polar residues) spans 224–255; it reads PNTNSNYYGESSLETANSALGSNLQVTVTNKQ. Low complexity predominate over residues 256–281; sequence SISNRLRSPPPSSRSSGNGPRFGNSP. Serine 280 is subject to Phosphoserine. Threonine 283 is modified (phosphothreonine). Phosphoserine is present on residues serine 291, serine 301, and serine 314. Residues 315–332 show a composition bias toward basic and acidic residues; the sequence is PHKEDVSAHHRSSHDHGY. Position 353 is a phosphoserine (serine 353). At threonine 365 the chain carries Phosphothreonine. Over residues 392–403 the composition is skewed to basic and acidic residues; sequence GKYERYSRDRYS. Positions 408-422 are enriched in low complexity; sequence RSPSVQHSRSRQSPS. Positions 444–468 are enriched in polar residues; the sequence is TTVSSTPSHTTRTSKRASGTGTSGD. The segment covering 473-484 has biased composition (low complexity); it reads SPRTSSRYMESS. Phosphoserine occurs at positions 487 and 492. Residues 495–508 are compositionally biased toward basic residues; that stretch reads HHYHHRRSPRMRQR. Residues 518 to 533 show a composition bias toward low complexity; it reads PSSASSESSASRSRSP. Serine 553 carries the phosphoserine modification. Disordered stretches follow at residues 574–661 and 675–782; these read ERQE…ADVP and PFSA…QRPV. A compositionally biased stretch (polar residues) spans 586 to 603; that stretch reads GALTINDNSSSVDGNTPN. Residues 609 to 623 are compositionally biased toward low complexity; it reads SAPGSGTPAAASTTS. Polar residues-rich tracts occupy residues 644–656 and 721–731; these read NKQN…NPAS and VTSSGSANKSV. A phosphoserine mark is found at serine 730, serine 743, serine 747, and serine 755. Acidic residues predominate over residues 746 to 760; the sequence is LSGDDDVIDSPEDFD. The region spanning 804 to 1098 is the Protein kinase domain; that stretch reads FEMIAQIGEG…AEDALRSPWL (295 aa). ATP is bound by residues 810-818, lysine 833, and 891-896; these read IGEGTYGQV and EYMDHD. Residue aspartate 936 is the Proton acceptor of the active site. An ATP-binding site is contributed by histidine 1118.

The protein belongs to the protein kinase superfamily. CMGC Ser/Thr protein kinase family. CDC2/CDKX subfamily. Interacts with cyclin CycK.

It localises to the nucleus. The protein resides in the chromosome. It catalyses the reaction [DNA-directed RNA polymerase] + ATP = phospho-[DNA-directed RNA polymerase] + ADP + H(+). The catalysed reaction is L-seryl-[protein] + ATP = O-phospho-L-seryl-[protein] + ADP + H(+). It carries out the reaction L-threonyl-[protein] + ATP = O-phospho-L-threonyl-[protein] + ADP + H(+). Cyclin-dependent kinase which displays CTD kinase activity: hyperphosphorylates the C-terminal heptapeptide repeat domain (CTD) of the largest RNA polymerase II subunit, thereby acting as a key regulator of transcription elongation. The sequence is that of Cyclin-dependent kinase 12 (Cdk12) from Drosophila melanogaster (Fruit fly).